The following is a 534-amino-acid chain: ATP-dependent RNA helicase DBP3 (534 aa).

The tract at residues 1-96 (MGSKRKHESG…VSSSSSGYTQ (96 aa)) is disordered. Residues 8–30 (ESGDVEVKKPKHDNEVKGKEKKE) are compositionally biased toward basic and acidic residues. Residues 31–53 (KKEKKEKKEKKEKKEKKEKKEKK) show a composition bias toward basic residues. Residues 54–63 (EKKEKNEKKE) show a composition bias toward basic and acidic residues. Low complexity predominate over residues 82-92 (STVSTVSSSSS). The short motif at 131-157 (LSFDHVQLQSKIAPIVTKFPKPTPIQS) is the Q motif element. The Helicase ATP-binding domain occupies 160-330 (WPYLLNGDDV…ATFMNKAVKV (171 aa)). Position 173–180 (173–180 (AETGSGKT)) interacts with ATP. Positions 278-281 (DEAD) match the DEAD box motif. Residues 359 to 504 (RLLQLLRQYG…PVPDELLKFG (146 aa)) form the Helicase C-terminal domain.

This sequence belongs to the DEAD box helicase family. DDX5/DBP2 subfamily.

It localises to the nucleus. Its subcellular location is the nucleolus. It carries out the reaction ATP + H2O = ADP + phosphate + H(+). Its function is as follows. ATP-dependent RNA helicase required for 60S ribosomal subunit synthesis. Involved in efficient pre-rRNA processing, predominantly at site A3, which is necessary for the normal formation of 25S and 5.8S rRNAs. This is ATP-dependent RNA helicase DBP3 (DBP3) from Meyerozyma guilliermondii (strain ATCC 6260 / CBS 566 / DSM 6381 / JCM 1539 / NBRC 10279 / NRRL Y-324) (Yeast).